Consider the following 974-residue polypeptide: Valine--tRNA ligase, chloroplastic/mitochondrial 2 (974 aa).

The short motif at Pro109 to His119 is the 'HIGH' region element. The stretch at Leu432–Lys454 is one LRR 1 repeat. Residues Glu489–Asp518 are a coiled coil. The 'KMSKS' region signature appears at Lys598–Ser602. Lys601 contributes to the ATP binding site. The stretch at Leu857 to Leu880 is one LRR 2 repeat.

The protein belongs to the class-I aminoacyl-tRNA synthetase family.

The protein resides in the plastid. It localises to the chloroplast. The protein localises to the mitochondrion. It carries out the reaction tRNA(Val) + L-valine + ATP = L-valyl-tRNA(Val) + AMP + diphosphate. The polypeptide is Valine--tRNA ligase, chloroplastic/mitochondrial 2 (Arabidopsis thaliana (Mouse-ear cress)).